The sequence spans 156 residues: ATP synthase subunit b (156 aa).

A helical membrane pass occupies residues Leu7–Pro27.

It belongs to the ATPase B chain family. In terms of assembly, F-type ATPases have 2 components, F(1) - the catalytic core - and F(0) - the membrane proton channel. F(1) has five subunits: alpha(3), beta(3), gamma(1), delta(1), epsilon(1). F(0) has three main subunits: a(1), b(2) and c(10-14). The alpha and beta chains form an alternating ring which encloses part of the gamma chain. F(1) is attached to F(0) by a central stalk formed by the gamma and epsilon chains, while a peripheral stalk is formed by the delta and b chains.

It localises to the cell inner membrane. F(1)F(0) ATP synthase produces ATP from ADP in the presence of a proton or sodium gradient. F-type ATPases consist of two structural domains, F(1) containing the extramembraneous catalytic core and F(0) containing the membrane proton channel, linked together by a central stalk and a peripheral stalk. During catalysis, ATP synthesis in the catalytic domain of F(1) is coupled via a rotary mechanism of the central stalk subunits to proton translocation. In terms of biological role, component of the F(0) channel, it forms part of the peripheral stalk, linking F(1) to F(0). The protein is ATP synthase subunit b of Pasteurella multocida (strain Pm70).